The primary structure comprises 483 residues: Zinc finger CCCH domain-containing protein 25 (483 aa).

The C3H1-type zinc-finger motif lies at 157-184 (RNRAHICSFFIRGECTRGDECPYRHEMP). In terms of domain architecture, RRM spans 228–301 (RTLYVGGLNS…QRLKLTWGRP (74 aa)). 2 disordered regions span residues 298–317 (WGRPQVPKPDQDGSNQQGSV) and 336–483 (PPML…GSSQ). The span at 336–351 (PPMLQYYMHPPPPQPP) shows a compositional bias: pro residues. Positions 370–380 (SSSKESGSSTS) are enriched in low complexity. Polar residues predominate over residues 381–391 (DNRGASSSSYT). Low complexity-rich tracts occupy residues 392–401 (MPPHGHYPQH) and 409–423 (YGGYMQPPYQQYPPY). Over residues 438–459 (QPGPGSRPNPPHPSSVSAPPPD) the composition is skewed to pro residues. The span at 460 to 476 (SVSAAPSGSSQQSADAA) shows a compositional bias: low complexity.

The protein is Zinc finger CCCH domain-containing protein 25 of Arabidopsis thaliana (Mouse-ear cress).